The primary structure comprises 176 residues: Xanthine-guanine phosphoribosyltransferase (176 aa).

Residues Arg51–Gly52, Arg88, and Asp111–Thr119 each bind 5-phospho-alpha-D-ribose 1-diphosphate. Arg88 contacts GMP. Asp112 is a binding site for Mg(2+). 2 residues coordinate guanine: Asp115 and Ile158. Xanthine contacts are provided by Asp115 and Ile158. GMP is bound by residues Asp115–Thr119 and Trp157–Ile158.

Belongs to the purine/pyrimidine phosphoribosyltransferase family. XGPT subfamily. As to quaternary structure, homotetramer. It depends on Mg(2+) as a cofactor.

The protein resides in the cell inner membrane. The enzyme catalyses GMP + diphosphate = guanine + 5-phospho-alpha-D-ribose 1-diphosphate. The catalysed reaction is XMP + diphosphate = xanthine + 5-phospho-alpha-D-ribose 1-diphosphate. It catalyses the reaction IMP + diphosphate = hypoxanthine + 5-phospho-alpha-D-ribose 1-diphosphate. Its pathway is purine metabolism; GMP biosynthesis via salvage pathway; GMP from guanine: step 1/1. The protein operates within purine metabolism; XMP biosynthesis via salvage pathway; XMP from xanthine: step 1/1. Purine salvage pathway enzyme that catalyzes the transfer of the ribosyl-5-phosphate group from 5-phospho-alpha-D-ribose 1-diphosphate (PRPP) to the N9 position of the 6-oxopurines guanine and xanthine to form the corresponding ribonucleotides GMP (guanosine 5'-monophosphate) and XMP (xanthosine 5'-monophosphate), with the release of PPi. To a lesser extent, also acts on hypoxanthine. The polypeptide is Xanthine-guanine phosphoribosyltransferase (Ruegeria sp. (strain TM1040) (Silicibacter sp.)).